Here is a 100-residue protein sequence, read N- to C-terminus: Large ribosomal subunit protein bL27 (100 aa).

The propeptide occupies 1 to 9 (MLVMNLQLF).

The protein belongs to the bacterial ribosomal protein bL27 family. Post-translationally, the N-terminus is cleaved by ribosomal processing cysteine protease Prp.

The sequence is that of Large ribosomal subunit protein bL27 from Clostridium botulinum (strain 657 / Type Ba4).